The chain runs to 93 residues: Alpha-defensin 9 (93 aa).

An N-terminal signal peptide occupies residues 1–19 (MKTLVLLSALVLLAFQVQA). A propeptide spanning residues 20-58 (DPIQNTDEETKTEEQPGEEDQAVSVSFGDPEGSSLQEES) is cleaved from the precursor. The disordered stretch occupies residues 23-56 (QNTDEETKTEEQPGEEDQAVSVSFGDPEGSSLQE). Intrachain disulfides connect cysteine 64–cysteine 92, cysteine 66–cysteine 81, and cysteine 71–cysteine 91.

Belongs to the alpha-defensin family. Paneth cells of the small bowel.

The protein localises to the secreted. In terms of biological role, probably contributes to the antimicrobial barrier function of the small bowel mucosa. The protein is Alpha-defensin 9 (Defa9) of Mus musculus (Mouse).